Consider the following 266-residue polypeptide: HLA class II histocompatibility antigen, DR beta 3 chain (266 aa).

The signal sequence occupies residues 1-29 (MVCLKLPGGSSLAALTVTLMVLSSRLAFA). The tract at residues 30–124 (GDTRPRFLEL…GESFTVQRRV (95 aa)) is beta-1. Topologically, residues 30–227 (GDTRPRFLEL…RARSESAQSK (198 aa)) are extracellular. Disulfide bonds link C44/C108 and C146/C202. Residue N48 is glycosylated (N-linked (GlcNAc...) asparagine). Positions 125 to 227 (HPQVTVYPAK…RARSESAQSK (103 aa)) are beta-2. In terms of domain architecture, Ig-like C1-type spans 126 to 214 (PQVTVYPAKT…EHPSVTSALT (89 aa)). Residues 228 to 248 (MLSGVGGFVLGLLFLGAGLFI) traverse the membrane as a helical segment. The Cytoplasmic portion of the chain corresponds to 249-266 (YFRNQKGHSGLQPTGFLS).

This sequence belongs to the MHC class II family. In terms of assembly, heterotrimer that consists of an alpha chain HLA-DRA, a beta chain HLA-DRB1 and a peptide (peptide-MHCII). Newly synthesized alpha and beta chains forms a heterodimer (MHCII) that associates with the CD74/invariant chain (Ii) in the endoplasmic reticulum (ER). Ii is a trimer composed of three subunits and each subunit interacts with one MHCII dimer, blocking the peptide-binding cleft. As a result, MHCII molecules cannot bind peptides present in the ER. The complex of MHCII and CD74/Ii is transported in vesicles from ER to Golgi to lysosomes, where it encounters antigenic peptides generated via proteolysis of endocytosed antigens. MHCII dimers are dissociated from CD74/Ii by the combined action of proteolysis and HLA-DM. Lysosomal enzymes such as cathepsin, degrade CD74/Ii leaving a 24 amino acid remnant called class II-associated Ii or CLIP. Interacts (via the peptide binding cleft) with CLIP; this interaction inhibits antigen peptide binding before entry in the endosomal compartment. The displacement of CLIP and replacement by a high affinity peptide in lysosomes is performed by HLA-DM heterodimer. HLA-DM catalyzes CLIP dissociation from MHCII, stabilizes empty MHCII and mediates the selection of high affinity peptides. Interacts with HLA-DM heterodimer; this interaction is direct. Interacts with TCR (via CDR3). Interacts (via beta-2 domain) with CD4 coreceptor (via Ig-like V-type domain); this interaction is of exceptionally low affinity yet necessary for optimal recognition of antigenic peptides. Post-translationally, ubiquitinated by MARCHF1 and MARCHF8 at Lys-254 leading to sorting into the endosome system and down-regulation of MHC class II. As to expression, expressed in professional APCs: monocyte/macrophages, dendritic cells and B cells (at protein level).

It is found in the cell membrane. It localises to the endoplasmic reticulum membrane. The protein resides in the lysosome membrane. The protein localises to the late endosome membrane. Its subcellular location is the autolysosome membrane. In terms of biological role, a beta chain of antigen-presenting major histocompatibility complex class II (MHCII) molecule. In complex with the alpha chain HLA-DRA, displays antigenic peptides on professional antigen presenting cells (APCs) for recognition by alpha-beta T cell receptor (TCR) on HLA-DRB3-restricted CD4-positive T cells. This guides antigen-specific T-helper effector functions, both antibody-mediated immune response and macrophage activation, to ultimately eliminate the infectious agents and transformed cells. Typically presents extracellular peptide antigens of 10 to 30 amino acids that arise from proteolysis of endocytosed antigens in lysosomes. In the tumor microenvironment, presents antigenic peptides that are primarily generated in tumor-resident APCs likely via phagocytosis of apoptotic tumor cells or macropinocytosis of secreted tumor proteins. Presents peptides derived from intracellular proteins that are trapped in autolysosomes after macroautophagy, a mechanism especially relevant for T cell selection in the thymus and central immune tolerance. The selection of the immunodominant epitopes follows two processing modes: 'bind first, cut/trim later' for pathogen-derived antigenic peptides and 'cut first, bind later' for autoantigens/self-peptides. The anchor residue at position 1 of the peptide N-terminus, usually a large hydrophobic residue, is essential for high affinity interaction with MHCII molecules. Its function is as follows. ALLELE DRB3*01:01: Exclusively presents several immunogenic epitopes derived from C.tetani neurotoxin tetX, playing a significant role in immune recognition and long-term protection. Presents viral epitopes derived from HHV-6B U11, TRX2/U56 and U85 antigens to polyfunctional CD4-positive T cells with cytotoxic activity implicated in control of HHV-6B infection. ALLELE DRB3*02:02 Exclusively presents several immunogenic epitopes derived from C.tetani neurotoxin tetX, playing a significant role in immune recognition and long-term protection. Upon EBV infection, presents to CD4-positive T cells latent antigen EBNA2 (PRSPTVFYNIPPMPLPPSQL) and lytic antigen BZLF1 (LTAYHVSTAPTGSWF) peptides, driving oligoclonal expansion and selection of virus-specific memory T cell subsets with cytotoxic potential to directly eliminate virus-infected B cells. Presents viral epitopes derived from HHV-6B U11, gB/U39 and gH/U48 antigens to polyfunctional CD4-positive T cells with cytotoxic activity implicated in control of HHV-6B infection. Plays a minor role in CD4-positive T cell immune response against Dengue virus by presenting conserved peptides from capsid and non-structural NS3 proteins. Displays peptides derived from IAV matrix protein M, implying a role in protection against IAV infection. In the context of tumor immunesurveillance, may present to T-helper 1 cells an immunogenic epitope derived from tumor-associated antigen WT1 (KRYFKLSHLQMHSRKH), likely providing for effective antitumor immunity in a wide range of solid and hematological malignancies. Presents to Vbeta2-positive T-helper 1 cells specifically an immunodominant peptide derived from tumor antigen CTAG1A/NY-ESO-1(PGVLLKEFTVSGNILTIRLTAADHR) and confers protective memory response. In metastatic epithelial tumors, presents to intratumoral CD4-positive T cells a TP53 neoantigen (HYNYMCNSSCMGSMNRRPILTIITL) carrying G245S hotspot driver mutation and may mediate tumor regression. Functionally, ALLELE DRB3*03:01: Presents a series of conserved peptides derived from the M.tuberculosis PPE family of proteins, in particular PPE29 and PPE33, known to be highly immunogenic. Presents immunogenic epitopes derived from C.tetani neurotoxin tetX, playing a role in immune recognition and long-term protection. Displays immunodominant viral peptides from HCV non-structural protein NS2, as part of a broad range T-helper response to resolve infection. This chain is HLA class II histocompatibility antigen, DR beta 3 chain (HLA-DRB3), found in Homo sapiens (Human).